The sequence spans 114 residues: Large ribosomal subunit protein uL22 (114 aa).

This sequence belongs to the universal ribosomal protein uL22 family. In terms of assembly, part of the 50S ribosomal subunit.

Functionally, this protein binds specifically to 23S rRNA; its binding is stimulated by other ribosomal proteins, e.g. L4, L17, and L20. It is important during the early stages of 50S assembly. It makes multiple contacts with different domains of the 23S rRNA in the assembled 50S subunit and ribosome. Its function is as follows. The globular domain of the protein is located near the polypeptide exit tunnel on the outside of the subunit, while an extended beta-hairpin is found that lines the wall of the exit tunnel in the center of the 70S ribosome. In Bacillus licheniformis (strain ATCC 14580 / DSM 13 / JCM 2505 / CCUG 7422 / NBRC 12200 / NCIMB 9375 / NCTC 10341 / NRRL NRS-1264 / Gibson 46), this protein is Large ribosomal subunit protein uL22.